Here is a 221-residue protein sequence, read N- to C-terminus: U1 small nuclear ribonucleoprotein C (221 aa).

The segment at 4–36 (HYCDYCDVFLTHDSVSVRKAHNSGRNHLQNVRE) adopts a Matrin-type zinc-finger fold. A disordered region spans residues 80-221 (GAGPLSGSSD…PHSRTGYGPR (142 aa)). Over residues 142–158 (YSRPPPQGGPYSRPPPD) the composition is skewed to pro residues. A compositionally biased stretch (low complexity) spans 178–190 (PLGYGAPLPGAYP). A compositionally biased stretch (pro residues) spans 191–204 (SGPPPNMRGPPPPL).

This sequence belongs to the U1 small nuclear ribonucleoprotein C family. As to quaternary structure, U1 snRNP is composed of the 7 core Sm proteins B/B', D1, D2, D3, E, F and G that assemble in a heptameric protein ring on the Sm site of the small nuclear RNA to form the core snRNP, and at least 3 U1 snRNP-specific proteins U1-70K, U1-A and U1-C. U1-C interacts with U1 snRNA and the 5' splice-site region of the pre-mRNA.

It is found in the nucleus. Its function is as follows. Component of the spliceosomal U1 snRNP, which is essential for recognition of the pre-mRNA 5' splice-site and the subsequent assembly of the spliceosome. U1-C is directly involved in initial 5' splice-site recognition for both constitutive and regulated alternative splicing. The interaction with the 5' splice-site seems to precede base-pairing between the pre-mRNA and the U1 snRNA. Stimulates commitment or early (E) complex formation by stabilizing the base pairing of the 5' end of the U1 snRNA and the 5' splice-site region. In Mycosarcoma maydis (Corn smut fungus), this protein is U1 small nuclear ribonucleoprotein C.